Consider the following 119-residue polypeptide: Large ribosomal subunit protein bL20 (119 aa).

It belongs to the bacterial ribosomal protein bL20 family.

Binds directly to 23S ribosomal RNA and is necessary for the in vitro assembly process of the 50S ribosomal subunit. It is not involved in the protein synthesizing functions of that subunit. This is Large ribosomal subunit protein bL20 from Chloroflexus aurantiacus (strain ATCC 29366 / DSM 635 / J-10-fl).